The following is a 143-amino-acid chain: Putative pre-16S rRNA nuclease (143 aa).

This sequence belongs to the YqgF nuclease family.

It is found in the cytoplasm. Could be a nuclease involved in processing of the 5'-end of pre-16S rRNA. This is Putative pre-16S rRNA nuclease from Lactococcus lactis subsp. cremoris (strain MG1363).